The chain runs to 359 residues: tRNA-specific 2-thiouridylase MnmA (359 aa).

Residues 6 to 13 (AMSGGVDS) and leucine 32 contribute to the ATP site. The active-site Nucleophile is the cysteine 101. Cysteines 101 and 193 form a disulfide. Glycine 125 is a binding site for ATP. An interaction with tRNA region spans residues 143 to 145 (KDQ). Catalysis depends on cysteine 193, which acts as the Cysteine persulfide intermediate.

This sequence belongs to the MnmA/TRMU family.

It localises to the cytoplasm. It carries out the reaction S-sulfanyl-L-cysteinyl-[protein] + uridine(34) in tRNA + AH2 + ATP = 2-thiouridine(34) in tRNA + L-cysteinyl-[protein] + A + AMP + diphosphate + H(+). Catalyzes the 2-thiolation of uridine at the wobble position (U34) of tRNA, leading to the formation of s(2)U34. This chain is tRNA-specific 2-thiouridylase MnmA, found in Mycobacterium sp. (strain JLS).